A 145-amino-acid chain; its full sequence is UI (145 aa).

The signal sequence occupies residues 1–22 (MKPVPLVLLITSVLLTTHIPLS). V143 carries the post-translational modification Valine amide.

The protein belongs to the sauvagine/corticotropin-releasing factor/urotensin I family.

It localises to the secreted. Urotensin is found in the teleost caudal neurosecretory system. It has a suggested role in osmoregulation and as a corticotropin-releasing factor. The non-hormonal portion of this precursor may be a urotensin binding protein, urophysin. The sequence is that of UI from Carassius auratus (Goldfish).